Here is a 240-residue protein sequence, read N- to C-terminus: Thymidylate kinase (240 aa).

Residue 10–17 (GINGVGKS) coordinates ATP.

This sequence belongs to the thymidylate kinase family.

It carries out the reaction dTMP + ATP = dTDP + ADP. It participates in pyrimidine metabolism; dTTP biosynthesis. In terms of biological role, catalyzes the conversion of dTMP to dTDP. The sequence is that of Thymidylate kinase (TMK) from African swine fever virus (strain Badajoz 1971 Vero-adapted) (Ba71V).